The primary structure comprises 334 residues: Fructose-1,6-bisphosphatase class 1 (334 aa).

4 residues coordinate Mg(2+): E89, D112, L114, and D115. Substrate is bound by residues 115–118, N208, Y241, and K271; that span reads DGSS. Mg(2+) is bound at residue E277.

Belongs to the FBPase class 1 family. Homotetramer. Mg(2+) serves as cofactor.

It is found in the cytoplasm. The enzyme catalyses beta-D-fructose 1,6-bisphosphate + H2O = beta-D-fructose 6-phosphate + phosphate. Its pathway is carbohydrate biosynthesis; gluconeogenesis. This is Fructose-1,6-bisphosphatase class 1 from Serratia proteamaculans (strain 568).